Consider the following 1930-residue polypeptide: Transport and Golgi organization protein 1 homolog (1930 aa).

The signal sequence occupies residues 1–24; the sequence is MAAAPGLLFWLFVLGALWWVPGQS. At 25–1171 the chain is on the lumenal side; sequence DLSHGRRFSD…EPAAVPPLES (1147 aa). Residues 45-107 enclose the SH3 domain; sequence MLMYRGKALE…PKDLIKVLHK (63 aa). Disordered stretches follow at residues 144 to 263, 317 to 496, 547 to 737, 754 to 891, and 1018 to 1149; these read LELE…REKT, EEEE…AAEK, LGSS…MNSQ, TKQP…TPEI, and TAPL…PVGA. The span at 152-189 shows a compositional bias: basic and acidic residues; sequence EESKKAEEVSQHREKSPEESRGRELDPVPEPEAFRADS. The span at 197–211 shows a compositional bias: polar residues; it reads SESTEGLQGQPSAQE. Ser-229 bears the Phosphoserine mark. Positions 247-256 are enriched in polar residues; that stretch reads ESRTGNSSPA. Acidic residues predominate over residues 317–330; the sequence is EEEEEVEEDADSSD. The span at 338–368 shows a compositional bias: basic and acidic residues; sequence SDKDEKVPGKPMIEKYLTDKDPNLSEEDKVE. N-linked (GlcNAc...) asparagine glycosylation is present at Asn-360. A compositionally biased stretch (acidic residues) spans 420–430; that stretch reads DSEDEGDDLFV. Composition is skewed to basic and acidic residues over residues 431–442 and 451–461; these read EEPKTNDVKDSE and GEEKDIQESRK. N-linked (GlcNAc...) asparagine glycosylation occurs at Asn-631. Over residues 661 to 677 the composition is skewed to basic and acidic residues; it reads EDGTDAEQARAIRRPQE. Residues 692–701 are compositionally biased toward acidic residues; the sequence is DEEEEEEEGD. Residues 715-726 show a composition bias toward polar residues; sequence VSAQQSRENSPS. Over residues 791–800 the composition is skewed to basic and acidic residues; that stretch reads EESHLADMRA. At Ser-856 the chain carries Phosphoserine. Positions 1030–1039 are enriched in basic and acidic residues; it reads GWARPGEERQ. Composition is skewed to polar residues over residues 1040-1054 and 1115-1127; these read PPQQDSLPQENTGDL and QPVTGYTSTSEVS. Residues 1128–1137 show a composition bias toward basic and acidic residues; that stretch reads QKPDTKKDID. The stretch at 1172-1192 is an intramembrane region; that stretch reads AFGSLYAFILYLSKMLLATLP. Residues 1193–1202 are Lumenal-facing; it reads DNVQPGPDFY. The helical transmembrane segment at 1203–1223 threads the bilayer; it reads GLPWQPVIITAVLGIVSFAIF. Over 1224–1930 the chain is Cytoplasmic; sequence SWRTILVVKS…DRSQASKPTP (707 aa). 2 coiled-coil regions span residues 1236–1329 and 1359–1422; these read YQVT…KNQD and LNEA…EIAL. Residues 1238-1677 are mediates interaction with MIA2; sequence VTEKQISEKL…VIVKPMPGRP (440 aa). Residues 1447 to 1472 form a disordered region; sequence ESEDPDKGGNESDDLANGETGGDRSE. The residue at position 1458 (Ser-1458) is a Phosphoserine. A coiled-coil region spans residues 1514–1662; the sequence is NLEDQIKKLE…LLEMTQKMAM (149 aa). Disordered stretches follow at residues 1669–1796, 1801–1820, and 1840–1930; these read IVKP…VPLM, PPPIRYGPPPQLCGGPFGPR, and APGV…KPTP. Residues 1677-1694 show a composition bias toward polar residues; sequence PNTQNPPRRGLLSQNGSF. Phosphoserine is present on residues Ser-1693 and Ser-1705. Positions 1706–1715 are enriched in pro residues; it reads PPLPAEPPGR. Positions 1722–1738 are enriched in basic and acidic residues; sequence SRRDTPRSEFGSLDRHL. Ser-1733, Ser-1754, Ser-1766, and Ser-1770 each carry phosphoserine. The span at 1760 to 1773 shows a compositional bias: low complexity; it reads PVVNSSSRSSSPAK. The interval 1776-1930 is proline-rich domain (PRD); mediates interaction with the COPII coat subunits SEC23A and SEC23B; sequence DEGKVNMAPK…DRSQASKPTP (155 aa). Residues 1801–1811 are compositionally biased toward pro residues; that stretch reads PPPIRYGPPPQ. Arg-1805 carries the post-translational modification Asymmetric dimethylarginine. Residues 1809–1869 are SEC16A-interacting region (SIR); required for its localization to endoplasmic reticulum exit sites and for its interaction with SEC16A; it reads PPQLCGGPFG…GHTPFRPPGS (61 aa). Residues 1846 to 1858 show a composition bias toward basic and acidic residues; it reads GKRDLPLDPREFL. The segment covering 1881 to 1898 has biased composition (pro residues); sequence RLPPPTHGPQEYPPPPPA. Ser-1915 carries the phosphoserine modification. Over residues 1915–1930 the composition is skewed to polar residues; it reads SPSSVQDRSQASKPTP.

The protein belongs to the MIA/OTOR family. Tango1 subfamily. In terms of assembly, interacts with MIA2. Interacts (via SH3 domain) with COL7A1. Interacts with the COPII coat subunits SEC23A, SEC23B and maybe SEC24C. May interact with APOB and MIA2. Interacts with SEC16A.

Its subcellular location is the endoplasmic reticulum membrane. Plays a role in the transport of cargos that are too large to fit into COPII-coated vesicles and require specific mechanisms to be incorporated into membrane-bound carriers and exported from the endoplasmic reticulum. This protein is required for collagen VII (COL7A1) secretion by loading COL7A1 into transport carriers. It may participate in cargo loading of COL7A1 at endoplasmic reticulum exit sites by binding to COPII coat subunits Sec23/24 and guiding SH3-bound COL7A1 into a growing carrier. Does not play a role in global protein secretion and is apparently specific to COL7A1 cargo loading. However, it may participate in secretion of other proteins in cells that do not secrete COL7A1. It is also specifically required for the secretion of lipoproteins by participating in their export from the endoplasmic reticulum. Required for correct assembly of COPII coat components at endoplasmic reticulum exit sites (ERES) and for the localization of SEC16A and membrane-bound ER-resident complexes consisting of MIA2 and PREB/SEC12 to ERES. In Mus musculus (Mouse), this protein is Transport and Golgi organization protein 1 homolog.